We begin with the raw amino-acid sequence, 149 residues long: Probable flagellum biosynthesis repressor protein FlbT (149 aa).

The protein belongs to the FlbT family.

Has a post-transcriptional repressor function in flagellum biogenesis. Associates with the 5'-UTR of fljK mRNA and promotes its degradation. In Rhizobium etli (strain ATCC 51251 / DSM 11541 / JCM 21823 / NBRC 15573 / CFN 42), this protein is Probable flagellum biosynthesis repressor protein FlbT.